We begin with the raw amino-acid sequence, 492 residues long: UTP--glucose-1-phosphate uridylyltransferase (492 aa).

UTP is bound by residues 110–113, lysine 124, glutamine 183, and glycine 210; that span reads LNGG. 112–113 serves as a coordination point for substrate; that stretch reads GG. Lysine 124 lines the Mg(2+) pocket. Residues histidine 211 and 239 to 241 contribute to the substrate site; that span reads NID. Positions 241 and 379 each coordinate UTP. Aspartate 241 serves as a coordination point for Mg(2+). Lysine 379 is an active-site residue. The oligomerization stretch occupies residues 441–492; sequence VLTVSGNVLFGKNVVLKGTVIILADEKSKICVPDGSVLEDNIIYGNLPIIDH.

It belongs to the UDPGP type 1 family. As to quaternary structure, homooctamer.

It catalyses the reaction alpha-D-glucose 1-phosphate + UTP + H(+) = UDP-alpha-D-glucose + diphosphate. Plays a central role as a glucosyl donor in cellular metabolic pathways. This Encephalitozoon cuniculi (strain GB-M1) (Microsporidian parasite) protein is UTP--glucose-1-phosphate uridylyltransferase (UGP1).